The chain runs to 539 residues: Chaperonin GroEL (539 aa).

ATP is bound by residues 29–32 (TIGP), 86–90 (DGTTT), Gly-413, 476–478 (NAA), and Asp-492.

Belongs to the chaperonin (HSP60) family. In terms of assembly, forms a cylinder of 14 subunits composed of two heptameric rings stacked back-to-back. Interacts with the co-chaperonin GroES.

It localises to the cytoplasm. The catalysed reaction is ATP + H2O + a folded polypeptide = ADP + phosphate + an unfolded polypeptide.. Functionally, together with its co-chaperonin GroES, plays an essential role in assisting protein folding. The GroEL-GroES system forms a nano-cage that allows encapsulation of the non-native substrate proteins and provides a physical environment optimized to promote and accelerate protein folding. In Staphylococcus epidermidis, this protein is Chaperonin GroEL.